We begin with the raw amino-acid sequence, 503 residues long: Lithocholate 6-beta-hydroxylase (503 aa).

Cys-442 contacts heme.

Belongs to the cytochrome P450 family. Heme serves as cofactor.

Its subcellular location is the endoplasmic reticulum membrane. The protein localises to the microsome membrane. The enzyme catalyses lithocholate + reduced [NADPH--hemoprotein reductase] + O2 = 6beta-hydroxylithocholate + oxidized [NADPH--hemoprotein reductase] + H2O + H(+). Its function is as follows. Catalyzes the 6 beta-hydroxylation of lithocholic acid and steroid hormones. This chain is Lithocholate 6-beta-hydroxylase (CYP3A10), found in Mesocricetus auratus (Golden hamster).